A 140-amino-acid polypeptide reads, in one-letter code: Non-specific lipid transfer protein GPI-anchored 33 (140 aa).

An N-terminal signal peptide occupies residues 1–27; the sequence is MAYTNKVTISAAVATMMLFLAVTIVDA. 4 disulfide bridges follow: Cys40–Cys80, Cys52–Cys64, Cys65–Cys104, and Cys78–Cys112. Asn91 carries N-linked (GlcNAc...) asparagine glycosylation. Gly115 carries the GPI-anchor amidated glycine lipid modification. Positions 116–140 are cleaved as a propeptide — removed in mature form; sequence DASGGSTNKIAASMVLLGLVASLFF.

It belongs to the plant LTP family.

The protein resides in the cell membrane. Its function is as follows. Probable lipid transfer protein. In Arabidopsis thaliana (Mouse-ear cress), this protein is Non-specific lipid transfer protein GPI-anchored 33.